Reading from the N-terminus, the 305-residue chain is UPF0612 protein C337.02c (305 aa).

2 coiled-coil regions span residues 27–63 (IERYERSVDSTLLEIDENKREALEKNILRKDRKMKYE) and 120–207 (NDMN…DARS).

It belongs to the UPF0612 family.

This Schizosaccharomyces pombe (strain 972 / ATCC 24843) (Fission yeast) protein is UPF0612 protein C337.02c.